We begin with the raw amino-acid sequence, 202 residues long: Josephin-1 (202 aa).

The residue at position 15 (serine 15) is a Phosphoserine. In terms of domain architecture, Josephin spans 23–202; it reads PPQIYHEKQR…EAHQSWRTDV (180 aa). Cysteine 36 serves as the catalytic Nucleophile. Histidine 139 (proton acceptor) is an active-site residue.

As to quaternary structure, interacts with beta-actin/ACTB. In terms of processing, monoubiquitinated. Ubiquitination activates deubiquitination activity in vitro.

Its subcellular location is the cell membrane. The protein resides in the cytoplasm. It carries out the reaction Thiol-dependent hydrolysis of ester, thioester, amide, peptide and isopeptide bonds formed by the C-terminal Gly of ubiquitin (a 76-residue protein attached to proteins as an intracellular targeting signal).. Its function is as follows. Deubiquitinates monoubiquitinated probes (in vitro). When ubiquitinated, cleaves 'Lys-63'-linked and 'Lys-48'-linked poly-ubiquitin chains (in vitro), hence may act as a deubiquitinating enzyme. May increase macropinocytosis and suppress clathrin- and caveolae-mediated endocytosis. May enhance membrane dynamics and cell motility independently of its catalytic activity. The polypeptide is Josephin-1 (JOSD1) (Pongo abelii (Sumatran orangutan)).